Consider the following 332-residue polypeptide: D-alanine--D-alanine ligase (332 aa).

In terms of domain architecture, ATP-grasp spans 112 to 312 (KRIWRADGLP…YPDLCLRILA (201 aa)). 138–193 (FQELGAPMIVKPSREGSTIGLTKVTSLGQCEQAYRLAAQHDPEVLCEQFIDGDETT) is an ATP binding site. 3 residues coordinate Mg(2+): D265, E279, and N281.

The protein belongs to the D-alanine--D-alanine ligase family. Mg(2+) serves as cofactor. It depends on Mn(2+) as a cofactor.

The protein resides in the cytoplasm. The catalysed reaction is 2 D-alanine + ATP = D-alanyl-D-alanine + ADP + phosphate + H(+). It functions in the pathway cell wall biogenesis; peptidoglycan biosynthesis. Its function is as follows. Cell wall formation. The sequence is that of D-alanine--D-alanine ligase from Acidovorax ebreus (strain TPSY) (Diaphorobacter sp. (strain TPSY)).